Consider the following 864-residue polypeptide: Leucine--tRNA ligase (864 aa).

A 'HIGH' region motif is present at residues proline 50 to histidine 60. Positions lysine 622–serine 626 match the 'KMSKS' region motif. Residue lysine 625 coordinates ATP.

The protein belongs to the class-I aminoacyl-tRNA synthetase family.

The protein resides in the cytoplasm. The enzyme catalyses tRNA(Leu) + L-leucine + ATP = L-leucyl-tRNA(Leu) + AMP + diphosphate. This chain is Leucine--tRNA ligase, found in Acidiphilium cryptum (strain JF-5).